Here is a 301-residue protein sequence, read N- to C-terminus: 4-hydroxy-tetrahydrodipicolinate synthase (301 aa).

Position 55 (T55) interacts with pyruvate. Residue Y143 is the Proton donor/acceptor of the active site. Residue K171 is the Schiff-base intermediate with substrate of the active site. I213 contacts pyruvate.

The protein belongs to the DapA family. Homotetramer; dimer of dimers.

Its subcellular location is the cytoplasm. It catalyses the reaction L-aspartate 4-semialdehyde + pyruvate = (2S,4S)-4-hydroxy-2,3,4,5-tetrahydrodipicolinate + H2O + H(+). Its pathway is amino-acid biosynthesis; L-lysine biosynthesis via DAP pathway; (S)-tetrahydrodipicolinate from L-aspartate: step 3/4. Functionally, catalyzes the condensation of (S)-aspartate-beta-semialdehyde [(S)-ASA] and pyruvate to 4-hydroxy-tetrahydrodipicolinate (HTPA). This chain is 4-hydroxy-tetrahydrodipicolinate synthase, found in Psychrobacter arcticus (strain DSM 17307 / VKM B-2377 / 273-4).